A 242-amino-acid chain; its full sequence is Probable septum site-determining protein MinC (242 aa).

The segment covering 120-135 (APKKVEEKPAEPEHKP) has biased composition (basic and acidic residues). Positions 120–144 (APKKVEEKPAEPEHKPSRIVTSPVR) are disordered.

Belongs to the MinC family. Interacts with MinD and FtsZ.

Its function is as follows. Cell division inhibitor that blocks the formation of polar Z ring septums. Rapidly oscillates between the poles of the cell to destabilize FtsZ filaments that have formed before they mature into polar Z rings. Prevents FtsZ polymerization. The chain is Probable septum site-determining protein MinC from Ectopseudomonas mendocina (strain ymp) (Pseudomonas mendocina).